The sequence spans 280 residues: tRNA dimethylallyltransferase (280 aa).

9 to 16 provides a ligand contact to ATP; sequence GPTGSGKT. Position 11-16 (11-16) interacts with substrate; the sequence is TGSGKT. Residues 34–37 are interaction with substrate tRNA; it reads DSVS.

It belongs to the IPP transferase family. As to quaternary structure, monomer. Requires Mg(2+) as cofactor.

The catalysed reaction is adenosine(37) in tRNA + dimethylallyl diphosphate = N(6)-dimethylallyladenosine(37) in tRNA + diphosphate. In terms of biological role, catalyzes the transfer of a dimethylallyl group onto the adenine at position 37 in tRNAs that read codons beginning with uridine, leading to the formation of N6-(dimethylallyl)adenosine (i(6)A). This is tRNA dimethylallyltransferase from Acholeplasma laidlawii (strain PG-8A).